Consider the following 383-residue polypeptide: Acetylornithine deacetylase (383 aa).

Zn(2+) is bound at residue His-80. The active site involves Asp-82. Asp-112 provides a ligand contact to Zn(2+). The active site involves Glu-144. Residues Glu-145, Glu-169, and His-355 each contribute to the Zn(2+) site.

This sequence belongs to the peptidase M20A family. ArgE subfamily. Homodimer. Zn(2+) serves as cofactor. The cofactor is Co(2+). Requires glutathione as cofactor.

The protein localises to the cytoplasm. It catalyses the reaction N(2)-acetyl-L-ornithine + H2O = L-ornithine + acetate. The protein operates within amino-acid biosynthesis; L-arginine biosynthesis; L-ornithine from N(2)-acetyl-L-ornithine (linear): step 1/1. Its function is as follows. Catalyzes the hydrolysis of the amide bond of N(2)-acetylated L-amino acids. Cleaves the acetyl group from N-acetyl-L-ornithine to form L-ornithine, an intermediate in L-arginine biosynthesis pathway, and a branchpoint in the synthesis of polyamines. The chain is Acetylornithine deacetylase from Shigella flexneri.